Here is an 880-residue protein sequence, read N- to C-terminus: Protein transport protein SEC23 A (880 aa).

A compositionally biased stretch (polar residues) spans 1–13 (MANLPKSSVNYPG). The segment at 1-95 (MANLPKSSVN…PPGPPVFNTP (95 aa)) is disordered. Residues 20-36 (PNRPSPQPDRTPVPHSP) show a composition bias toward pro residues. Residues 57 to 70 (MSSPSMKSPSLLSP) are compositionally biased toward low complexity. Residues Cys204, Cys207, Cys226, and Cys229 each contribute to the Zn(2+) site. Positions 204–229 (CLNCGAYSNPYSSILIGSGQWQCVIC) are zinc finger-like.

This sequence belongs to the SEC23/SEC24 family. SEC24 subfamily. In terms of assembly, component of the coat protein complex II (COPII), composed of at least five proteins: the Sec23/24 complex, the Sec13/31 complex and Sar1. In terms of tissue distribution, mostly expressed in seedlings, roots, cotyledons, leaves, trichomes, leaf primordia and flowers, and, to a lower extent, in mature siliques.

It localises to the cytoplasmic vesicle. The protein resides in the COPII-coated vesicle membrane. It is found in the endoplasmic reticulum membrane. The protein localises to the membrane. In terms of biological role, component of the coat protein complex II (COPII) which promotes the formation of transport vesicles from the endoplasmic reticulum (ER). The coat has two main functions, the physical deformation of the endoplasmic reticulum membrane into vesicles and the selection of cargo molecules. May contribute to COPII-coated vesicles formation and ER-Golgi vesicle transport. Together with SEC23D, essential for pollen wall development and exine patterning, probably by regulating endoplasmic reticulum (ER) export of lipids and proteins (e.g. sporopollenin) necessary for pollen wall formation. Also involved in plastid physiology in anther tapetal cells. The polypeptide is Protein transport protein SEC23 A (Arabidopsis thaliana (Mouse-ear cress)).